Here is a 443-residue protein sequence, read N- to C-terminus: D-serine dehydratase (443 aa).

The residue at position 118 (Lys118) is an N6-(pyridoxal phosphate)lysine.

It belongs to the serine/threonine dehydratase family. DsdA subfamily. In terms of assembly, monomer. Requires pyridoxal 5'-phosphate as cofactor.

The catalysed reaction is D-serine = pyruvate + NH4(+). In Yersinia enterocolitica serotype O:8 / biotype 1B (strain NCTC 13174 / 8081), this protein is D-serine dehydratase.